The primary structure comprises 236 residues: UPF0502 protein Bxeno_B1639 (236 aa).

It belongs to the UPF0502 family.

This chain is UPF0502 protein Bxeno_B1639, found in Paraburkholderia xenovorans (strain LB400).